A 472-amino-acid chain; its full sequence is Relaxin-3 receptor 1 (472 aa).

At 1–81 (MQVASATPAA…ESTDTEARVR (81 aa)) the chain is on the extracellular side. 2 N-linked (GlcNAc...) asparagine glycosylation sites follow: N36 and N40. The helical transmembrane segment at 82–102 (ILISAVYWVVCALGLAGNLLV) threads the bilayer. The Cytoplasmic portion of the chain corresponds to 103-119 (LYLMKSKQGWRKSSINL). Residues 120–140 (FVTNLALTDFQFVLTLPFWAV) traverse the membrane as a helical segment. Topologically, residues 141-156 (ENALDFKWPFGKAMCK) are extracellular. A disulfide bridge links C155 with C247. The helical transmembrane segment at 157 to 177 (IVSMVTSMNMYASVFFLTAMS) threads the bilayer. Residues 178-215 (VARYHSVASALKSHRTRGRGRGDCCGQSLRESCCFSAK) are Cytoplasmic-facing. A helical membrane pass occupies residues 216 to 236 (VLCGLIWASAALASLPNAIFS). Residues 237-270 (TTIRVLGEELCLMHFPDKLLGWDRQFWLGLYHLQ) lie on the Extracellular side of the membrane. A helical membrane pass occupies residues 271-291 (KVLLGFLLPLSIISLCYLLLV). The Cytoplasmic portion of the chain corresponds to 292-298 (RFISDRR). Residues 299–319 (VVGTTDAVGAAAAPGGGLSTA) traverse the membrane as a helical segment. Topologically, residues 320 to 332 (SARRRSKVTKSVT) are extracellular. The helical transmembrane segment at 333 to 353 (IVVLSFFLCWLPNQALTTWSI) threads the bilayer. At 354–472 (LIKFNAVPFS…YDLLPSSSAY (119 aa)) the chain is on the cytoplasmic side.

Belongs to the G-protein coupled receptor 1 family.

It localises to the cell membrane. Receptor for RNL3/relaxin-3. Binding of the ligand inhibit cAMP accumulation. This is Relaxin-3 receptor 1 (Rxfp3) from Mus musculus (Mouse).